The primary structure comprises 364 residues: Long-wave-sensitive opsin 1 (364 aa).

Residues 1 to 58 are Extracellular-facing; sequence MTQRWGPQRLAGGQPQAGLEESTQASIFTYTNSNATRDPFEGPNYHIAPRWVYHLTSA. Serine 22 carries an O-linked (GlcNAc) serine glycan. N-linked (GlcNAc...) asparagine glycosylation is present at asparagine 34. A helical membrane pass occupies residues 59-79; it reads WMIFVVIASVFTNGLVLVATM. Residues 80 to 90 lie on the Cytoplasmic side of the membrane; that stretch reads RFKKLRHPLNW. A helical transmembrane segment spans residues 91-111; it reads ILVNLAIADLAETIIASTISV. The Extracellular segment spans residues 112–126; the sequence is VNQIYGYFVLGHPLC. The cysteines at positions 126 and 203 are disulfide-linked. The chain crosses the membrane as a helical span at residues 127–147; it reads VVEGYTVSLCGITGLWSLAII. The Cytoplasmic portion of the chain corresponds to 148–168; sequence SWERWLVVCKPFGNVRFDAKL. Residues 169 to 189 traverse the membrane as a helical segment; it reads AIAGIAFSWIWAAVWTAPPIF. Topologically, residues 190–219 are extracellular; the sequence is GWSRYWPHGLKTSCGPDVFSGSSYPGVQSY. The chain crosses the membrane as a helical span at residues 220–240; sequence MIVLMTTCCIIPLSVIILCYL. Over 241 to 269 the chain is Cytoplasmic; it reads QVWLAIRAVAKQQKESESTQKAEKEVTRM. Residues 270–290 traverse the membrane as a helical segment; sequence VVVMVLAYCLCWGPYTFFACF. The Extracellular segment spans residues 291–301; that stretch reads AAAHPGYAFHP. The helical transmembrane segment at 302-324 threads the bilayer; that stretch reads LVAALPAYFAKSATIYNPIIYVF. An N6-(retinylidene)lysine modification is found at lysine 312. The Cytoplasmic portion of the chain corresponds to 325–364; the sequence is MNRQFRNCILQLFGKKVDDSSELSSASRTEASSVSSVSPA.

Belongs to the G-protein coupled receptor 1 family. Opsin subfamily. Phosphorylated on some or all of the serine and threonine residues present in the C-terminal region. In terms of tissue distribution, the three color pigments are found in the cone photoreceptor cells.

Its subcellular location is the membrane. Visual pigments are the light-absorbing molecules that mediate vision. They consist of an apoprotein, opsin, covalently linked to cis-retinal. This chain is Long-wave-sensitive opsin 1 (OPN1LW), found in Canis lupus familiaris (Dog).